We begin with the raw amino-acid sequence, 223 residues long: UPF0441 protein YgiB (223 aa).

The segment covering Thr-178 to Thr-195 has biased composition (low complexity). The disordered stretch occupies residues Thr-178–Gly-223. A compositionally biased stretch (polar residues) spans Ala-204 to Gly-223.

This sequence belongs to the UPF0441 family.

The protein is UPF0441 protein YgiB of Shigella boydii serotype 18 (strain CDC 3083-94 / BS512).